We begin with the raw amino-acid sequence, 289 residues long: Acetyl-coenzyme A carboxylase carboxyl transferase subunit beta 2 (289 aa).

Positions 25-289 (VWTKCPSCEQ…TNKSIQPEAE (265 aa)) constitute a CoA carboxyltransferase N-terminal domain. The Zn(2+) site is built by C29, C32, C48, and C51. The C4-type zinc-finger motif lies at 29 to 51 (CPSCEQVLYRIALKENLEVCPKC).

It belongs to the AccD/PCCB family. As to quaternary structure, acetyl-CoA carboxylase is a heterohexamer composed of biotin carboxyl carrier protein (AccB), biotin carboxylase (AccC) and two subunits each of ACCase subunit alpha (AccA) and ACCase subunit beta (AccD). Zn(2+) is required as a cofactor.

It localises to the cytoplasm. The enzyme catalyses N(6)-carboxybiotinyl-L-lysyl-[protein] + acetyl-CoA = N(6)-biotinyl-L-lysyl-[protein] + malonyl-CoA. The protein operates within lipid metabolism; malonyl-CoA biosynthesis; malonyl-CoA from acetyl-CoA: step 1/1. Functionally, component of the acetyl coenzyme A carboxylase (ACC) complex. Biotin carboxylase (BC) catalyzes the carboxylation of biotin on its carrier protein (BCCP) and then the CO(2) group is transferred by the transcarboxylase to acetyl-CoA to form malonyl-CoA. The protein is Acetyl-coenzyme A carboxylase carboxyl transferase subunit beta 2 of Vibrio campbellii (strain ATCC BAA-1116).